Consider the following 269-residue polypeptide: MNADRPCCQFVTTKPTVENVTPFAQFQLTQPRLKGVSLQQLSALPILYGGGRNFLFGRFTDSEPQLQDTDLFVLDSCILLWPAHALRGLRIPYDAVIYHAVRRADVLELVLAVERDATLDSLFPPAPGPQPFALSTLELRLRPRYATYDRHYSGAVEQLFTFRDFGLNRGDAMVANCNTAIATCMEFHHRAAAADDDDDDDDGPAAHVTPLAELLAPAGHVPIYANHGSADDLTDDGLTDDGPQGGAAAGMALAFCSAARVPTKRRRQD.

Belongs to the LOT5 family.

Its subcellular location is the cytoplasm. The protein localises to the nucleus. This chain is Protein LOT5 (LOT5), found in Eremothecium gossypii (strain ATCC 10895 / CBS 109.51 / FGSC 9923 / NRRL Y-1056) (Yeast).